The sequence spans 823 residues: DNA mismatch repair protein MutS (823 aa).

ATP is bound at residue 605–612; sequence GPNMSGKS.

The protein belongs to the DNA mismatch repair MutS family.

Its function is as follows. This protein is involved in the repair of mismatches in DNA. It is possible that it carries out the mismatch recognition step. This protein has a weak ATPase activity. This is DNA mismatch repair protein MutS from Fervidobacterium nodosum (strain ATCC 35602 / DSM 5306 / Rt17-B1).